The sequence spans 1403 residues: Centrosomal protein of 162 kDa (1403 aa).

The tract at residues 19–44 is disordered; sequence ELSDDSFENSNETPSQPNKDRKKKDT. Polar residues predominate over residues 26–35; the sequence is ENSNETPSQP. Phosphoserine is present on residues Ser156 and Ser159. 3 disordered regions span residues 171-235, 305-342, and 449-586; these read NVEP…EKTG, DTGE…TTES, and NPSL…SDDS. Basic and acidic residues predominate over residues 176 to 189; that stretch reads EGGRENESEHKELP. Over residues 192 to 204 the composition is skewed to acidic residues; the sequence is YSDDFEDAEDTDE. Over residues 206–220 the composition is skewed to basic and acidic residues; sequence LITKDEETRPKENPE. Residues 449 to 466 are compositionally biased toward polar residues; sequence NPSLLPQDNKANQTSRSR. A Phosphoserine modification is found at Ser468. Over residues 481-496 the composition is skewed to basic residues; it reads PCKKARSAPPLPRRKP. A compositionally biased stretch (polar residues) spans 504-517; the sequence is ARSSGYSKPSSPLQ. Basic and acidic residues-rich tracts occupy residues 522–532 and 567–581; these read LEKKTSKDNTK and PHRE…RPED. Coiled-coil stretches lie at residues 610-1120, 1170-1205, and 1234-1385; these read KRAQ…MLSR, EVLE…QLES, and CQNA…LHRQ.

This sequence belongs to the CEP162 family. As to quaternary structure, interacts with alpha-tubulin. Interacts with CPNE4. Interacts with CEP290.

It is found in the cytoplasm. The protein resides in the cytoskeleton. Its subcellular location is the microtubule organizing center. The protein localises to the centrosome. It localises to the centriole. It is found in the spindle. The protein resides in the nucleus. Its function is as follows. Required to promote assembly of the transition zone in primary cilia. Acts by specifically recognizing and binding the axonemal microtubule. Localizes to the distal ends of centrioles before ciliogenesis and directly binds to axonemal microtubule, thereby promoting and restricting transition zone formation specifically at the cilia base. Required to mediate CEP290 association with microtubules. In Rattus norvegicus (Rat), this protein is Centrosomal protein of 162 kDa (Cep162).